We begin with the raw amino-acid sequence, 371 residues long: Protein SOMBRERO (371 aa).

An NAC domain is found at 17 to 166; the sequence is VPPGFRFHPT…GWVVCRVFKK (150 aa). Residues 118 to 172 mediate DNA binding; it reads IGLRKTLVFYTGRAPHGQKTEWIMHEYRLDDSENEIQEDGWVVCRVFKKKNHFRG. Disordered stretches follow at residues 176 to 213 and 316 to 355; these read EQEQ…LILH and VQNH…NQRF. Residues 192–201 are compositionally biased toward basic and acidic residues; that stretch reads NDHDHHHHID. 2 stretches are compositionally biased toward low complexity: residues 202 to 213 and 340 to 349; these read SNSNNHSPLILH and GNNNGGSSSS.

As to expression, accumulates in maturing root cap cells, in both COL and LRC cells.

Its subcellular location is the nucleus. Transcription regulator. Together with BRN1 and BRN2, regulates cellular maturation of root cap. Represses stem cell-like divisions in the root cap daughter cells, and thus promotes daughter cell fate. Inhibits expression of its positive regulator FEZ in a feedback loop for controlled switches in cell division plane. Promotes the expression of genes involved in secondary cell walls (SCW) biosynthesis. This is Protein SOMBRERO (SMB) from Arabidopsis thaliana (Mouse-ear cress).